The primary structure comprises 378 residues: MNLKDITDPSDFKTTKLPALAELDILKRCYICKDLLNAPVRTQCDHTYCSQCIREFLLRDNRCPLCKTEVFESGLKRDPLLEEIVISYASLRPHLLRLLEIEKVESKQEVDREKSANESASNGNRNVNNDVDETVRVKDQSNADELGEEKGQAQHGEQVNEQTTEVISLLSDDEENGSDSLVKCPICFERMELDVLQGKHIDDCLSGKSTKRTPTDILSPKAKRPKQITSFFKPTIDTKTPSPPTSKASTTPTATPTTTLLKANVSSPSPVAQSTVHKGKPLPKLDFSSLSTQKIKAKLSDLKLPTTGSRNEMEARYLHYYVIYNANLDSNHPVKESILRQQLKQWEMVQHQPSFGDAEWKGAETGNWKELIARARSN.

The segment at 29–67 (CYICKDLLNAPVRTQCDHTYCSQCIREFLLRDNRCPLCK) adopts an RING-type zinc-finger fold. A disordered region spans residues 109–162 (EVDREKSANESASNGNRNVNNDVDETVRVKDQSNADELGEEKGQAQHGEQVNEQ). A compositionally biased stretch (polar residues) spans 117–129 (NESASNGNRNVNN). A UBZ4-type zinc finger spans residues 181–209 (LVKCPICFERMELDVLQGKHIDDCLSGKS). Positions 184, 187, 200, and 204 each coordinate Zn(2+). Positions 233–256 (KPTIDTKTPSPPTSKASTTPTATP) are disordered. The span at 245-256 (TSKASTTPTATP) shows a compositional bias: low complexity. Residues 287-321 (FSSLSTQKIKAKLSDLKLPTTGSRNEMEARYLHYY) form the SAP domain.

It belongs to the RAD18 family. In terms of assembly, interacts with E2 UBC2, forming a complex with ubiquitin ligase activity.

The protein localises to the nucleus. The enzyme catalyses S-ubiquitinyl-[E2 ubiquitin-conjugating enzyme]-L-cysteine + [acceptor protein]-L-lysine = [E2 ubiquitin-conjugating enzyme]-L-cysteine + N(6)-ubiquitinyl-[acceptor protein]-L-lysine.. The protein operates within protein modification; protein ubiquitination. In terms of biological role, E3 RING-finger protein, member of the UBC2/RAD6 epistasis group. Associates to the E2 ubiquitin conjugating enzyme UBC2/RAD6 to form the UBC2-RAD18 ubiquitin ligase complex involved in postreplicative repair (PRR) of damaged DNA. The chain is Postreplication repair E3 ubiquitin-protein ligase RAD18 (RAD18) from Candida albicans (strain SC5314 / ATCC MYA-2876) (Yeast).